Here is an 828-residue protein sequence, read N- to C-terminus: Isethionate sulfite-lyase (828 aa).

The region spanning Glu30–Lys698 is the PFL domain. Residues Arg187, Gln191, Cys466–Glu468, and Arg676 each bind 2-hydroxyethane-1-sulfonate. Catalysis depends on Cys466, which acts as the Cysteine radical intermediate. The Proton acceptor role is filled by Glu468. The region spanning Asp705–Met828 is the Glycine radical domain. Gly803 is subject to Glycine radical.

The protein belongs to the glycyl radical enzyme (GRE) family. In terms of assembly, homodimer. In terms of processing, requires the activating protein IseH to generate the key active site glycyl radical on Gly-803 that is involved in catalysis.

It carries out the reaction 2-hydroxyethane-1-sulfonate = acetaldehyde + sulfite + H(+). The protein operates within organosulfur degradation; alkanesulfonate degradation. In terms of biological role, involved in an anaerobic respiration pathway that converts the sulfonate isethionate (2-hydroxyethanesulfonate) to ammonia, acetate and sulfide. Catalyzes the radical-mediated C-S bond cleavage of isethionate (2-hydroxyethanesulfonate) to form sulfite and acetaldehyde. Shows no activity with taurine or ethanolamine as substrates. In Nitratidesulfovibrio vulgaris (strain ATCC 29579 / DSM 644 / CCUG 34227 / NCIMB 8303 / VKM B-1760 / Hildenborough) (Desulfovibrio vulgaris), this protein is Isethionate sulfite-lyase.